A 266-amino-acid polypeptide reads, in one-letter code: Undecaprenyl-diphosphatase 1 (266 aa).

The next 8 helical transmembrane spans lie at 1–21 (MSII…FLPI), 39–59 (QGLA…VIYF), 83–103 (SKLG…GLLL), 113–133 (SAWV…YADA), 141–161 (IYQL…VAMI), 189–209 (FLLA…ELAL), 218–238 (TLLL…YMFL), and 244–264 (MGML…IVFL).

It belongs to the UppP family.

The protein localises to the cell inner membrane. It catalyses the reaction di-trans,octa-cis-undecaprenyl diphosphate + H2O = di-trans,octa-cis-undecaprenyl phosphate + phosphate + H(+). Catalyzes the dephosphorylation of undecaprenyl diphosphate (UPP). Confers resistance to bacitracin. The sequence is that of Undecaprenyl-diphosphatase 1 from Pseudoalteromonas translucida (strain TAC 125).